The primary structure comprises 110 residues: Host transcription reprogramming factor 2 (110 aa).

Residues 1-18 (MHLKASSILALLVIGANA) form the signal peptide. A C2H2-type zinc finger spans residues 68–96 (IMCGYCGKRFWNKPDLEKHIKLKPSKGGH). Residues 88 to 110 (KLKPSKGGHKGQPYKEHSWNRPT) are disordered. Residues 100–110 (PYKEHSWNRPT) show a composition bias toward basic and acidic residues.

The protein localises to the secreted. It localises to the host nucleus. Secreted effector that translocates into the nuclei of host cells to reprogram the expression of immunity-associated genes by binding to effector binding elements (EBEs) in rice. Binds the 5'-CCACCTCC-3' EBE of promoters from targeted rice genes and probably recruits a yet to be determined host repressor. Causes ambivalent immunity with increased susceptibility to the hemibiotrophic pathogens Magnaporthe oryzae and Xanthomonas oryzae pv. oryzae, but enhances resistance to Cochliobolus miyabeanus, a necrotrophic pathogen. In Pyricularia oryzae (strain 70-15 / ATCC MYA-4617 / FGSC 8958) (Rice blast fungus), this protein is Host transcription reprogramming factor 2.